The primary structure comprises 655 residues: Probable glucan endo-1,3-beta-glucosidase btgC (655 aa).

2 disordered regions span residues 1-61 (MSGD…ATPG) and 89-114 (SGVD…PGSD). The Cytoplasmic portion of the chain corresponds to 1-282 (MSGDPRSFSF…PKPGTGSRKR (282 aa)). Over residues 19–33 (DSSQQPLHPTNTMAD) the composition is skewed to polar residues. The span at 89–98 (SGVDAFRDTD) shows a compositional bias: basic and acidic residues. A helical; Signal-anchor for type II membrane protein membrane pass occupies residues 283–303 (GWIVGIILAVVIVGAIVGGAV). The Extracellular segment spans residues 304–655 (GGTLGNREKE…IPDCGGKTAT (352 aa)). The segment at 305–338 (GTLGNREKESPSSSETASGDEKVNGDLGKDSDEI) is disordered. Positions 323 to 338 (GDEKVNGDLGKDSDEI) are enriched in basic and acidic residues. An N-linked (GlcNAc...) asparagine glycan is attached at Asn-426. Glu-458 (proton donor) is an active-site residue. The active-site Nucleophile is Glu-557. Residues Asn-576 and Asn-602 are each glycosylated (N-linked (GlcNAc...) asparagine).

The protein belongs to the glycosyl hydrolase 17 family.

It localises to the cell membrane. It catalyses the reaction Hydrolysis of (1-&gt;3)-beta-D-glucosidic linkages in (1-&gt;3)-beta-D-glucans.. Functionally, glucanases play a role in cell expansion during growth, in cell-cell fusion during mating, and in spore release during sporulation. This enzyme may be involved in beta-glucan degradation. Active on laminarin and lichenan. The polypeptide is Probable glucan endo-1,3-beta-glucosidase btgC (btgC) (Aspergillus terreus (strain NIH 2624 / FGSC A1156)).